The primary structure comprises 213 residues: Large ribosomal subunit protein uL3 (213 aa).

Gln151 carries the post-translational modification N5-methylglutamine.

This sequence belongs to the universal ribosomal protein uL3 family. Part of the 50S ribosomal subunit. Forms a cluster with proteins L14 and L19. Methylated by PrmB.

In terms of biological role, one of the primary rRNA binding proteins, it binds directly near the 3'-end of the 23S rRNA, where it nucleates assembly of the 50S subunit. The polypeptide is Large ribosomal subunit protein uL3 (Rhizobium etli (strain CIAT 652)).